The primary structure comprises 712 residues: Potassium transporter 1 (712 aa).

Residues 1–19 (MNQSPSLIEQGISQQHLKT) lie on the Cytoplasmic side of the membrane. A helical membrane pass occupies residues 20–40 (LSCANVLTLAYQSLGVIYGDL). Topologically, residues 41–67 (STSPLYVYKTTFSGKLSLHEDDEEIFG) are extracellular. A helical transmembrane segment spans residues 68 to 88 (VFSFIFWTFTLIALFKYVFIV). At 89-154 (LSADDNGEGG…FFEKHPKSQK (66 aa)) the chain is on the cytoplasmic side. Residues 155–175 (CLLLFVLLGTCMAIGDSVLTP) traverse the membrane as a helical segment. The Extracellular segment spans residues 176-189 (TISVLSAVSGVKLK). A helical transmembrane segment spans residues 190 to 210 (IPNLHENYVVIIACIILVAIF). Over 211–219 (SVQRYGTHR) the chain is Cytoplasmic. A helical membrane pass occupies residues 220–240 (VAFIFAPISTAWLLSISSIGV). Residues 241–267 (YNTIKWNPRIVSALSPVYMYKFLRSTG) lie on the Extracellular side of the membrane. A helical membrane pass occupies residues 268-288 (VEGWVSLGGVVLSITGVETMF). Residues 289 to 300 (ADLGHFSSLSIK) are Cytoplasmic-facing. Residues 301 to 321 (VAFSFFVYPCLILAYMGEAAF) form a helical membrane-spanning segment. The Extracellular portion of the chain corresponds to 322–340 (LSKHHEDIQQSFYKAIPEP). A helical transmembrane segment spans residues 341–361 (VFWPVFIVATFAAVVGSQAVI). The Cytoplasmic segment spans residues 362–392 (SATFSIISQCCALDCFPRVKIIHTSSKIHGQ). Residues 393–413 (IYIPEVNWMLMCLCLAVTIGL) traverse the membrane as a helical segment. Residues 414–424 (RDTNMMGHAYG) lie on the Extracellular side of the membrane. Residues 425-445 (LAVTSVMLVTTCLMTLVMTIV) traverse the membrane as a helical segment. Topologically, residues 446–449 (WKQR) are cytoplasmic. Residues 450 to 470 (IITVLAFVVFFGSIELLYFSS) traverse the membrane as a helical segment. Over 471–474 (CVYK) the chain is Extracellular. A helical membrane pass occupies residues 475–495 (VPEGGWIPILLSLTFMAVMYI). Residues 496–712 (WNYGTTKKHE…LLEVGMVYYV (217 aa)) are Cytoplasmic-facing.

It belongs to the HAK/KUP transporter (TC 2.A.72.3) family. As to expression, detected in the whole mature plant but preferentially expressed in roots and stems, and in potassium-starved plants.

It localises to the cell membrane. In terms of biological role, high-affinity potassium transporter that could play a major role in the uptake of potassium from the rhizosphere. May act as a low-affinity potassium transporter under high potassium concentrations. Could also transport rubidium. The chain is Potassium transporter 1 (POT1) from Arabidopsis thaliana (Mouse-ear cress).